The following is a 389-amino-acid chain: Agamous-like MADS-box protein AGL65 (389 aa).

The region spanning 1 to 61 (MGRVKLKIKR…GRATAFHGEH (61 aa)) is the MADS-box domain. Coiled-coil stretches lie at residues 77 to 131 (QERT…LMEC) and 293 to 325 (GMEE…QQQD). The disordered stretch occupies residues 310 to 343 (NLQQQQQQQQQQQQQDPSMYDPMANNNGGCFQIP). The segment covering 312–324 (QQQQQQQQQQQQQ) has biased composition (low complexity).

Forms a heterodimer with AGL104. As to expression, expressed in pollen.

The protein localises to the nucleus. Functionally, probable transcription factor that forms a heterodimer with the MADS-box protein AGL104 and is involved in the regulation of pollen maturation at the late stages of pollen development and pollen tube growth. The protein is Agamous-like MADS-box protein AGL65 of Arabidopsis thaliana (Mouse-ear cress).